A 348-amino-acid polypeptide reads, in one-letter code: Fructose-1,6-bisphosphatase class 1 (348 aa).

Residues glutamate 92, aspartate 111, leucine 113, and aspartate 114 each coordinate Mg(2+). Residues 114 to 117 (DGSS) and asparagine 204 contribute to the substrate site. Mg(2+) is bound at residue glutamate 276.

Belongs to the FBPase class 1 family. In terms of assembly, homotetramer. It depends on Mg(2+) as a cofactor.

The protein resides in the cytoplasm. The catalysed reaction is beta-D-fructose 1,6-bisphosphate + H2O = beta-D-fructose 6-phosphate + phosphate. Its pathway is carbohydrate biosynthesis; gluconeogenesis. The sequence is that of Fructose-1,6-bisphosphatase class 1 from Methylorubrum populi (strain ATCC BAA-705 / NCIMB 13946 / BJ001) (Methylobacterium populi).